A 128-amino-acid polypeptide reads, in one-letter code: Protein yippee-like At3g08990 (128 aa).

Positions 12–109 (LVYSCKYCQT…LERFKVLGPY (98 aa)) constitute a Yippee domain. Cys-16, Cys-19, Cys-72, and Cys-75 together coordinate Zn(2+).

This sequence belongs to the yippee family.

This is Protein yippee-like At3g08990 from Arabidopsis thaliana (Mouse-ear cress).